Consider the following 87-residue polypeptide: U3-theraphotoxin-Hhn1g (87 aa).

The first 24 residues, M1–A24, serve as a signal peptide directing secretion. A propeptide spanning residues S25–R52 is cleaved from the precursor. Disulfide bonds link C54–C67, C61–C72, and C66–C79.

This sequence belongs to the neurotoxin 10 (Hwtx-1) family. 51 (Hntx-8) subfamily. Hntx-8 sub-subfamily. Expressed by the venom gland.

It is found in the secreted. In terms of biological role, ion channel inhibitor. The protein is U3-theraphotoxin-Hhn1g of Cyriopagopus hainanus (Chinese bird spider).